We begin with the raw amino-acid sequence, 212 residues long: MTRPIVIAIDGPAASGKGTLARRLAAAFNLPYLDTGLLYRAVARRVLDRGGDPADPAASEEQARSLSRLDLERGDLRTPEVDRAASAVASIKPVRAALLDFQRRFADASGAVLDGRDIGTIVFPEADVKLFVTASLDVRAKRRHLERLAHGIDPGFDSVRAELAARDEADRTRAAAPLVQAKDALLLDTSQMDANHAFTAAADLVNKVLARG.

11 to 19 provides a ligand contact to ATP; sequence GPAASGKGT. Residues 50-69 form a disordered region; sequence GGDPADPAASEEQARSLSRL.

It belongs to the cytidylate kinase family. Type 1 subfamily.

Its subcellular location is the cytoplasm. The enzyme catalyses CMP + ATP = CDP + ADP. The catalysed reaction is dCMP + ATP = dCDP + ADP. This is Cytidylate kinase from Acidiphilium cryptum (strain JF-5).